Here is a 615-residue protein sequence, read N- to C-terminus: Protein DBF4 homolog B (615 aa).

Positions 43-133 (ARKHPFSGKS…DPKGSHPRPS (91 aa)) constitute a BRCT domain. Disordered regions lie at residues 93-141 (REVK…DSVP) and 264-293 (FEAPTTLGSMHHTRESKDGEPSPRSAAHTM). Residues 275–284 (HTRESKDGEP) show a composition bias toward basic and acidic residues. The segment at 294 to 343 (PRRKKGYCECCQEAFEELHVHLQSAQHRSFALEAHLYAEVDRIIAQLSHS) adopts a DBF4-type zinc-finger fold. Zn(2+)-binding residues include Cys301, Cys304, His314, and His320. The interval 371–407 (TLHPHQPSHPRAASPRIRKEDSCQASVTQGRAAGQQR) is disordered.

As to quaternary structure, forms a complex with CDC7. Note that CDC7 forms distinct complex either with DBF4/DBF4A or DBF4B. Such complexes are stable upon replication stress. In terms of processing, phosphorylated. In terms of tissue distribution, widely expressed. Highly expressed in testis.

It localises to the nucleus. Regulatory subunit for CDC7 which activates its kinase activity thereby playing a central role in DNA replication and cell proliferation. Required for progression of S and M phases. The complex CDC7-DBF4B selectively phosphorylates MCM2 subunit at 'Ser-40' and then is involved in regulating the initiation of DNA replication during cell cycle. In Homo sapiens (Human), this protein is Protein DBF4 homolog B (DBF4B).